The primary structure comprises 308 residues: tRNA pseudouridine synthase B (308 aa).

Asp-47 functions as the Nucleophile in the catalytic mechanism.

It belongs to the pseudouridine synthase TruB family. Type 1 subfamily.

The catalysed reaction is uridine(55) in tRNA = pseudouridine(55) in tRNA. Responsible for synthesis of pseudouridine from uracil-55 in the psi GC loop of transfer RNAs. The chain is tRNA pseudouridine synthase B from Xanthomonas axonopodis pv. citri (strain 306).